The sequence spans 177 residues: MNTPVGVAEIVLGPGEVVFQTRPTRLRTLLGSCVAITFWHPWRRIGGMCHFMLPGRIRRHQPLDGRYADEAMEILIRHALANGTLPEEYQVKLFGGGEMFPAHRHDPHMQNVADSNVHAALALAEQHRLKLMAQDLGSTGHRNIIFDLWNGNVWVRHQPMEAIEKDAKQKNQRIAGR.

It belongs to the CheD family.

It carries out the reaction L-glutaminyl-[protein] + H2O = L-glutamyl-[protein] + NH4(+). Functionally, probably deamidates glutamine residues to glutamate on methyl-accepting chemotaxis receptors (MCPs), playing an important role in chemotaxis. The polypeptide is Probable chemoreceptor glutamine deamidase CheD (Pseudomonas savastanoi pv. phaseolicola (strain 1448A / Race 6) (Pseudomonas syringae pv. phaseolicola (strain 1448A / Race 6))).